We begin with the raw amino-acid sequence, 179 residues long: Putative BPIFA4P protein (179 aa).

The signal sequence occupies residues 1–20; the sequence is MLNVSGLFVLLCGLLVSSSA.

Belongs to the BPI/LBP/Plunc superfamily. Plunc family. As to expression, expressed in breast cancer and salivary gland.

The protein localises to the secreted. Its function is as follows. Major protein in sweat, has surfactant properties. The protein is Putative BPIFA4P protein (BPIFA4P) of Homo sapiens (Human).